The following is a 316-amino-acid chain: tRNA dimethylallyltransferase (316 aa).

ATP is bound at residue 17-24; sequence GPTASGKT. 19–24 contributes to the substrate binding site; sequence TASGKT. 3 interaction with substrate tRNA regions span residues 42-45, 166-170, and 247-252; these read DSAL, QRLSR, and RCVGYR.

The protein belongs to the IPP transferase family. Monomer. Requires Mg(2+) as cofactor.

The catalysed reaction is adenosine(37) in tRNA + dimethylallyl diphosphate = N(6)-dimethylallyladenosine(37) in tRNA + diphosphate. In terms of biological role, catalyzes the transfer of a dimethylallyl group onto the adenine at position 37 in tRNAs that read codons beginning with uridine, leading to the formation of N6-(dimethylallyl)adenosine (i(6)A). This is tRNA dimethylallyltransferase from Salmonella typhi.